The primary structure comprises 553 residues: Retrotransposon Gag-like protein 3 (553 aa).

The stretch at 2–43 (VEDLAASYVTLKLENEILQAQVKRLMEENAALQAQIPELQKS) forms a coiled coil. 2 disordered regions span residues 38-274 (PELQ…PLDP) and 474-514 (SGGV…EAER). Residues 45–57 (AVKEHEPLRKPSE) are compositionally biased toward basic and acidic residues. The span at 58–73 (AQEPPESPEFPAARES) shows a compositional bias: low complexity. The segment covering 87–113 (EPTKIREPREPSAISELREPPEIKEPQ) has biased composition (basic and acidic residues). Positions 118-127 (TNESGESSAI) are enriched in polar residues. The segment covering 132–147 (GSPEIKEPHLPPKSKE) has biased composition (basic and acidic residues). Residues 239-250 (QTVPEYQETSSQ) are compositionally biased toward polar residues. Residues 474–483 (SGGVDSSSSS) are compositionally biased toward low complexity. Over residues 495–507 (TENQPVQATSNRP) the composition is skewed to polar residues. The segment at 523–537 (CLYCGHPGHFARDCP) adopts a CCHC-type zinc-finger fold.

Expressed in embryonic myogenic progenitor cells, not expressed in adult and aged satellite cells.

Its subcellular location is the nucleus. Its function is as follows. May function as a transcriptional regulator. Plays a role in postnatal myogenesis, may be involved in the regulation of satellite cells self-renewal. The polypeptide is Retrotransposon Gag-like protein 3 (Mus musculus (Mouse)).